A 337-amino-acid polypeptide reads, in one-letter code: Cytidine deaminase 2 (337 aa).

2 consecutive CMP/dCMP-type deaminase domains span residues 43-164 (TDPI…FSSL) and 199-320 (LDCS…LKYL). Position 84 to 86 (84 to 86 (NVD)) interacts with substrate. Position 97 (H97) interacts with Zn(2+). E99 functions as the Proton donor in the catalytic mechanism. Residues C132 and C135 each contribute to the Zn(2+) site.

The protein belongs to the cytidine and deoxycytidylate deaminase family. Homodimer. Requires Zn(2+) as cofactor.

It catalyses the reaction cytidine + H2O + H(+) = uridine + NH4(+). It carries out the reaction 2'-deoxycytidine + H2O + H(+) = 2'-deoxyuridine + NH4(+). In terms of biological role, this enzyme scavenges exogenous and endogenous cytidine and 2'-deoxycytidine for UMP synthesis. The polypeptide is Cytidine deaminase 2 (CDA2) (Arabidopsis thaliana (Mouse-ear cress)).